Reading from the N-terminus, the 99-residue chain is Large ribosomal subunit protein eL30 (99 aa).

This sequence belongs to the eukaryotic ribosomal protein eL30 family. Part of the 50S ribosomal subunit.

The sequence is that of Large ribosomal subunit protein eL30 from Pyrococcus furiosus (strain ATCC 43587 / DSM 3638 / JCM 8422 / Vc1).